Reading from the N-terminus, the 630-residue chain is Plastin-1 (630 aa).

Methionine 1 carries the N-acetylmethionine modification. 2 EF-hand domains span residues 11-46 (EELE…ASLP) and 51-86 (KVRE…LKSK). Positions 24, 26, 28, 30, 35, 64, 66, 68, 70, and 75 each coordinate Ca(2+). 2 actin-binding regions span residues 108–381 (TSSI…GLHK) and 382–626 (PDNN…GKGL). Calponin-homology (CH) domains lie at 122 to 238 (EEEK…KVGL), 266 to 377 (LSPE…NTYP), 396 to 505 (SKEE…RRYT), and 517 to 626 (KVND…GKGL).

In terms of assembly, monomer. In terms of processing, phosphorylated.

It is found in the cytoplasm. Its subcellular location is the cell projection. The protein resides in the stereocilium. Actin-bundling protein. In the inner ear, it is required for stereocilia formation. Mediates liquid packing of actin filaments that is necessary for stereocilia to grow to their proper dimensions. The polypeptide is Plastin-1 (PLS1) (Bos taurus (Bovine)).